The following is a 253-amino-acid chain: N-acetylglucosaminyl-phosphatidylinositol de-N-acetylase (253 aa).

The helical transmembrane segment at 3-23 (VAAPLLCLAAAVLVWGVLWVW) threads the bilayer. Residues 24–253 (GSWERMTRPE…YMRINSLNFL (230 aa)) lie on the Cytoplasmic side of the membrane.

Belongs to the PIGL family.

It is found in the endoplasmic reticulum membrane. The catalysed reaction is a 6-(N-acetyl-alpha-D-glucosaminyl)-1-(1,2-diacyl-sn-glycero-3-phospho)-1D-myo-inositol + H2O = a 6-(alpha-D-glucosaminyl)-1-(1,2-diacyl-sn-glycero-3-phospho)-1D-myo-inositol + acetate. It participates in glycolipid biosynthesis; glycosylphosphatidylinositol-anchor biosynthesis. In terms of biological role, catalyzes the second step of glycosylphosphatidylinositol (GPI) biosynthesis, which is the de-N-acetylation of N-acetylglucosaminyl-phosphatidylinositol. The chain is N-acetylglucosaminyl-phosphatidylinositol de-N-acetylase (PIGL) from Bos taurus (Bovine).